Here is a 551-residue protein sequence, read N- to C-terminus: L-lactate permease (551 aa).

13 helical membrane-spanning segments follow: residues 13–33, 37–57, 69–89, 131–151, 159–179, 194–214, 220–240, 244–264, 366–386, 405–425, 438–458, 494–514, and 530–550; these read NIWLSSLIASLPILFFFFALI, LKGYVAASWTVAIALAVALLF, VVYGFFYGLWPIAWIIIAAVF, GAAGFGAPVAITAALLVGLGF, LCLIVNTAPVAFGAMGIPILV, MVGRQLPFMTIIVLFWIMAIM, IKETWPAVVVAGGSFAIAQYL, FIGPELPDIISSLVSLLCLTL, FDWFSATGTAILFAALLSIVW, LALPIYSIGMVLAFAFISNYS, TGHAFTFFSPFLGWLGVFLTG, VTGKMISPQSIAIACAAVGLV, and IFTCIVGVITTLQAYVLTWMI.

This sequence belongs to the lactate permease family.

The protein localises to the cell inner membrane. The enzyme catalyses (S)-lactate(in) + H(+)(in) = (S)-lactate(out) + H(+)(out). It catalyses the reaction (R)-lactate(in) + H(+)(in) = (R)-lactate(out) + H(+)(out). The catalysed reaction is glycolate(in) + H(+)(in) = glycolate(out) + H(+)(out). Its activity is regulated as follows. Inhibited by the proton ionophore carbonyl cyanide m-chlorophenylhydrazone (CCCP). Its function is as follows. Uptake of L-lactate across the membrane. Can also transport D-lactate and glycolate. Seems to be driven by a proton motive force. In Escherichia coli (strain K12), this protein is L-lactate permease.